The chain runs to 255 residues: Phosphatidylglycerol--prolipoprotein diacylglyceryl transferase (255 aa).

3 consecutive transmembrane segments (helical) span residues 15–35 (WYGIMIALGVLAALILANLNC), 46–66 (IDVFLISFPLAIIGARVYYVV), and 84–104 (LGGLAIHGGIIFGLGAAYIVS). Arginine 130 lines the a 1,2-diacyl-sn-glycero-3-phospho-(1'-sn-glycerol) pocket. Helical transmembrane passes span 169-189 (PTFLYESLWDLIVCIILVYIF), 196-216 (GTVICTYVGLYSLGRFFIEGL), and 228-248 (VAQLVSFIGIVLSISFFVYLK).

It belongs to the Lgt family.

It localises to the cell membrane. The enzyme catalyses L-cysteinyl-[prolipoprotein] + a 1,2-diacyl-sn-glycero-3-phospho-(1'-sn-glycerol) = an S-1,2-diacyl-sn-glyceryl-L-cysteinyl-[prolipoprotein] + sn-glycerol 1-phosphate + H(+). It functions in the pathway protein modification; lipoprotein biosynthesis (diacylglyceryl transfer). Catalyzes the transfer of the diacylglyceryl group from phosphatidylglycerol to the sulfhydryl group of the N-terminal cysteine of a prolipoprotein, the first step in the formation of mature lipoproteins. The polypeptide is Phosphatidylglycerol--prolipoprotein diacylglyceryl transferase (Clostridium kluyveri (strain NBRC 12016)).